A 404-amino-acid polypeptide reads, in one-letter code: Zinc finger protein zfs1 (404 aa).

A compositionally biased stretch (polar residues) spans 134 to 149 (SYLHSGSSPHGNTSNH). 2 disordered regions span residues 134 to 168 (SYLH…TGSG) and 259 to 322 (SNAS…APNG). Over residues 150 to 168 (PSPISSLESLPSRSSTGSG) the composition is skewed to low complexity. The segment covering 259-283 (SNASIRNAPSNLSKQFSPSGNSPLT) has biased composition (polar residues). Low complexity predominate over residues 304–317 (GSASHPHGSGSSNG). 2 consecutive C3H1-type zinc fingers follow at residues 326-354 (LYKT…HGNQ) and 364-392 (KYKS…HDES).

Interacts with moc3.

It is found in the cytoplasm. Its subcellular location is the nucleus. In terms of biological role, binds to specific AU-rich elements (ARE) in the 3'-untranslated region of target mRNAs and promotes their degradation. Binds to ARE present in the arz1 mRNA and stimulates the rate of arz1 mRNA decay. Required for coordination of septum formation with exit from mitosis. Involved in the mating response pathway. Induces sexual development and ascus formation. This Schizosaccharomyces pombe (strain 972 / ATCC 24843) (Fission yeast) protein is Zinc finger protein zfs1 (zfs1).